Here is a 173-residue protein sequence, read N- to C-terminus: Alpha-crystallin A chain (173 aa).

Position 1 is an N-acetylmethionine (methionine 1). The segment at 1-63 is required for complex formation with BFSP1 and BFSP2; sequence MDVTIQHPWF…RTVLDSGISE (63 aa). The residue at position 6 (glutamine 6) is a Deamidated glutamine; partial. Position 45 is a phosphoserine (serine 45). Glutamine 50 is subject to Deamidated glutamine; partial. The sHSP domain maps to 52–162; it reads LFRTVLDSGI…GHSERAIPVS (111 aa). N6-acetyllysine is present on lysine 70. Glutamine 90 carries the deamidated glutamine; partial modification. Lysine 99 bears the N6-acetyllysine mark. Histidine 100 lines the Zn(2+) pocket. Asparagine 101 is modified (deamidated asparagine; partial). Residues glutamate 102 and histidine 107 each contribute to the Zn(2+) site. Serine 122 carries the post-translational modification Phosphoserine. Asparagine 123 is modified (deamidated asparagine; partial). Positions 145–173 are disordered; the sequence is KVQSGLDAGHSERAIPVSREEKPSSAPSS. Glutamine 147 carries the post-translational modification Deamidated glutamine; partial. A compositionally biased stretch (basic and acidic residues) spans 153–167; that stretch reads GHSERAIPVSREEKP. Histidine 154 is a binding site for Zn(2+). Serine 162 is a glycosylation site (O-linked (GlcNAc) serine).

Belongs to the small heat shock protein (HSP20) family. As to quaternary structure, heteromer composed of three CRYAA and one CRYAB subunits. Inter-subunit bridging via zinc ions enhances stability, which is crucial as there is no protein turn over in the lens. Can also form homodimers and homotetramers (dimers of dimers) which serve as the building blocks of homooligomers. Within homooligomers, the zinc-binding motif is created from residues of 3 different molecules. His-100 and Glu-102 from one molecule are ligands of the zinc ion, and His-107 and His-154 residues from additional molecules complete the site with tetrahedral coordination geometry. Part of a complex required for lens intermediate filament formation composed of BFSP1, BFSP2 and CRYAA. Acetylation at Lys-70 may increase chaperone activity. In terms of processing, undergoes age-dependent proteolytical cleavage at the C-terminus.

The protein resides in the cytoplasm. The protein localises to the nucleus. In terms of biological role, contributes to the transparency and refractive index of the lens. Acts as a chaperone, preventing aggregation of various proteins under a wide range of stress conditions. Required for the correct formation of lens intermediate filaments as part of a complex composed of BFSP1, BFSP2 and CRYAA. This Oryctolagus cuniculus (Rabbit) protein is Alpha-crystallin A chain (CRYAA).